A 153-amino-acid chain; its full sequence is SsrA-binding protein (153 aa).

Positions 132–153 (REKDWLRERERVMKHDTRRRSD) are disordered.

It belongs to the SmpB family.

The protein localises to the cytoplasm. In terms of biological role, required for rescue of stalled ribosomes mediated by trans-translation. Binds to transfer-messenger RNA (tmRNA), required for stable association of tmRNA with ribosomes. tmRNA and SmpB together mimic tRNA shape, replacing the anticodon stem-loop with SmpB. tmRNA is encoded by the ssrA gene; the 2 termini fold to resemble tRNA(Ala) and it encodes a 'tag peptide', a short internal open reading frame. During trans-translation Ala-aminoacylated tmRNA acts like a tRNA, entering the A-site of stalled ribosomes, displacing the stalled mRNA. The ribosome then switches to translate the ORF on the tmRNA; the nascent peptide is terminated with the 'tag peptide' encoded by the tmRNA and targeted for degradation. The ribosome is freed to recommence translation, which seems to be the essential function of trans-translation. The polypeptide is SsrA-binding protein (Bordetella avium (strain 197N)).